The primary structure comprises 147 residues: Angiogenin (147 aa).

The N-terminal stretch at 1 to 24 (MVMGLGVLLLVFVLGLGLTPPTLA) is a signal peptide. Glutamine 25 is modified (pyrrolidone carboxylic acid). Residue histidine 37 is the Proton acceptor of the active site. Residues arginine 45 and aspartate 46 each contribute to the tRNA site. 3 cysteine pairs are disulfide-bonded: cysteine 50–cysteine 105, cysteine 63–cysteine 116, and cysteine 81–cysteine 131. The Nucleolar localization signal signature appears at 55–59 (RRRGL). Cysteine 105 and valine 127 together coordinate tRNA. Catalysis depends on histidine 138, which acts as the Proton donor.

Belongs to the pancreatic ribonuclease family. As to quaternary structure, homodimer. Interacts with RNH1; inhibiting ANG ribonuclease activity. Interacts with PCNA.

It is found in the secreted. It localises to the nucleus. Its subcellular location is the nucleolus. The protein resides in the cytoplasm. The protein localises to the stress granule. Has weak tRNA ribonuclease activity by itself due to partial autoinhibition by its C-terminus, which folds into a short alpha-helix that partially occludes the substrate-binding site. In absence of stress, the ribonuclease activity is inhibited by RNH1 in the cytoplasm. In response to stress, dissociates from RNH1 in the cytoplasm and associates with cytoplasmic ribosomes with vacant A-sites: ribosomes directly activate the tRNA ribonuclease activity of ANG by refolding the C-terminal alpha-helix. In response to stress, the angiogenic activity of ANG is inhibited by RNH1 in the nucleus. In terms of biological role, secreted ribonuclease that can either promote or restrict cell proliferation of target cells, depending on the context. Endocytosed in target cells via its receptor PLXNB2 and translocates to the cytoplasm or nucleus. Under stress conditions, localizes to the cytoplasm and promotes the assembly of stress granules (SGs): specifically cleaves a subset of tRNAs within anticodon loops to produce tRNA-derived stress-induced fragments (tiRNAs), resulting in translation repression and inhibition of cell proliferation. tiRNas also prevent formation of apoptosome, thereby promoting cell survival. Preferentially cleaves RNAs between a pyrimidine and an adenosine residue, suggesting that it cleaves the anticodon loop of tRNA(Ala) (32-UUAGCAU-38) after positions 33 and 36. Cleaves a subset of tRNAs, including tRNA(Ala), tRNA(Glu), tRNA(Gly), tRNA(Lys), tRNA(Val), tRNA(His), tRNA(Asp) and tRNA(Sec). Under growth conditions and in differentiated cells, translocates to the nucleus and stimulates ribosomal RNA (rRNA) transcription, including that containing the initiation site sequences of 45S rRNA, thereby promoting cell growth and proliferation. Angiogenin induces vascularization of normal and malignant tissues via its ability to promote rRNA transcription. Involved in hematopoietic stem and progenitor cell (HSPC) growth and survival by promoting rRNA transcription in growth conditions and inhibiting translation in response to stress, respectively. Mediates the crosstalk between myeloid and intestinal epithelial cells to protect the intestinal epithelial barrier integrity: secreted by myeloid cells and promotes intestinal epithelial cells proliferation and survival. Also mediates osteoclast-endothelial cell crosstalk in growing bone: produced by osteoclasts and protects the neighboring vascular cells against senescence by promoting rRNA transcription. This chain is Angiogenin (ANG), found in Pan troglodytes (Chimpanzee).